The primary structure comprises 478 residues: Lipoprotein lipase (478 aa).

A signal peptide spans 1–27 (MESKALLLVALSVWLQSLIVSREGLAT). The segment at 35-56 (RDFTDIESKFALRTPEDTVEDT) is interaction with GPIHBP1. The cysteines at positions 57 and 70 are disulfide-linked. N-linked (GlcNAc...) asparagine glycosylation is present at N73. Y124 carries the post-translational modification 3'-nitrotyrosine. The active-site Nucleophile is S162. D186 serves as the catalytic Charge relay system. At Y194 the chain carries 3'-nitrotyrosine. Residues A197, R200, S202, and D205 each coordinate Ca(2+). A disulfide bridge connects residues C246 and C269. The segment at 246 to 269 (CNIGEAIRVIAERGLGDVDQLVKC) is essential for determining substrate specificity. The Charge relay system role is filled by H271. Cystine bridges form between C294/C313 and C305/C308. In terms of domain architecture, PLAT spans 344-467 (FHYQVKMRFS…KGKSSVVFVK (124 aa)). 3'-nitrotyrosine is present on Y346. Residue N389 is glycosylated (N-linked (GlcNAc...) asparagine). An important for interaction with lipoprotein particles region spans residues 420–424 (WSNWW). The interval 433 to 437 (KIRVK) is important for heparin binding. The tract at residues 446–470 (IFCSREKKSHLQKGKSSVVFVKCHD) is interaction with GPIHBP1. A disulfide bond links C448 and C468.

It belongs to the AB hydrolase superfamily. Lipase family. In terms of assembly, homodimer. Interacts with GPIHBP1 with 1:1 stoichiometry. Interacts with APOC2; the interaction activates LPL activity in the presence of lipids. Interaction with heparan sulfate proteoglycans is required to protect LPL against loss of activity. Associates with lipoprotein particles in blood plasma. Interacts with LMF1 and SEL1L; interaction with SEL1L is required to prevent aggregation of newly synthesized LPL in the endoplasmic reticulum (ER), and for normal export of LPL from the ER to the extracellular space. Interacts with SORL1; SORL1 acts as a sorting receptor, promoting LPL localization to endosomes and later to lysosomes, leading to degradation of newly synthesized LPL. Post-translationally, tyrosine nitration after lipopolysaccharide (LPS) challenge down-regulates the lipase activity.

The protein localises to the cell membrane. The protein resides in the secreted. It is found in the extracellular space. It localises to the extracellular matrix. The catalysed reaction is a triacylglycerol + H2O = a diacylglycerol + a fatty acid + H(+). It carries out the reaction a 1,2-diacyl-sn-glycero-3-phosphocholine + H2O = a 2-acyl-sn-glycero-3-phosphocholine + a fatty acid + H(+). The enzyme catalyses 1,2,3-tri-(9Z-octadecenoyl)-glycerol + H2O = di-(9Z)-octadecenoylglycerol + (9Z)-octadecenoate + H(+). It catalyses the reaction 1,2-di-(9Z-octadecenoyl)-sn-glycero-3-phosphocholine + H2O = (9Z-octadecenoyl)-sn-glycero-3-phosphocholine + (9Z)-octadecenoate + H(+). The catalysed reaction is 1,2,3-tributanoylglycerol + H2O = dibutanoylglycerol + butanoate + H(+). It carries out the reaction 1,2-dihexadecanoyl-sn-glycero-3-phosphocholine + H2O = hexadecanoyl-sn-glycero-3-phosphocholine + hexadecanoate + H(+). The apolipoprotein APOC2 acts as a coactivator of LPL activity. Ca(2+) binding promotes protein stability and formation of the active homodimer. Interaction with GPIHBP1 protects LPL against inactivation by ANGPTL4. Key enzyme in triglyceride metabolism. Catalyzes the hydrolysis of triglycerides from circulating chylomicrons and very low density lipoproteins (VLDL), and thereby plays an important role in lipid clearance from the blood stream, lipid utilization and storage. Although it has both phospholipase and triglyceride lipase activities it is primarily a triglyceride lipase with low but detectable phospholipase activity. Mediates margination of triglyceride-rich lipoprotein particles in capillaries. Recruited to its site of action on the luminal surface of vascular endothelium by binding to GPIHBP1 and cell surface heparan sulfate proteoglycans. This chain is Lipoprotein lipase (LPL), found in Sus scrofa (Pig).